Reading from the N-terminus, the 314-residue chain is Cathepsin L 1 (314 aa).

The N-terminal stretch at 1-24 is a signal peptide; sequence MMLLGASLYLNNTQEVSDEIDTAN. The propeptide at 25-109 is activation peptide; it reads LYANWKMKYN…NAANSNFQYK (85 aa). 3 disulfides stabilise this stretch: Cys132/Cys175, Cys166/Cys207, and Cys259/Cys302. Cys135 is an active-site residue. Catalysis depends on residues His265 and Asn282.

The protein belongs to the peptidase C1 family.

It localises to the secreted. The catalysed reaction is Specificity close to that of papain. As compared to cathepsin B, cathepsin L exhibits higher activity toward protein substrates, but has little activity on Z-Arg-Arg-NHMec, and no peptidyl-dipeptidase activity.. Its function is as follows. May be involved in extracellular digestion. This Paramecium tetraurelia protein is Cathepsin L 1.